We begin with the raw amino-acid sequence, 164 residues long: FMN reductase (NADH) RutF (164 aa).

Belongs to the non-flavoprotein flavin reductase family. RutF subfamily.

The catalysed reaction is FMNH2 + NAD(+) = FMN + NADH + 2 H(+). Functionally, catalyzes the reduction of FMN to FMNH2 which is used to reduce pyrimidine by RutA via the Rut pathway. The polypeptide is FMN reductase (NADH) RutF (Klebsiella variicola (strain At-22)).